Reading from the N-terminus, the 347-residue chain is UDP-3-O-acylglucosamine N-acyltransferase (347 aa).

The Proton acceptor role is filled by H241.

Belongs to the transferase hexapeptide repeat family. LpxD subfamily. As to quaternary structure, homotrimer.

The catalysed reaction is a UDP-3-O-[(3R)-3-hydroxyacyl]-alpha-D-glucosamine + a (3R)-hydroxyacyl-[ACP] = a UDP-2-N,3-O-bis[(3R)-3-hydroxyacyl]-alpha-D-glucosamine + holo-[ACP] + H(+). It functions in the pathway bacterial outer membrane biogenesis; LPS lipid A biosynthesis. Catalyzes the N-acylation of UDP-3-O-acylglucosamine using 3-hydroxyacyl-ACP as the acyl donor. Is involved in the biosynthesis of lipid A, a phosphorylated glycolipid that anchors the lipopolysaccharide to the outer membrane of the cell. The sequence is that of UDP-3-O-acylglucosamine N-acyltransferase from Neisseria meningitidis serogroup A / serotype 4A (strain DSM 15465 / Z2491).